Here is a 431-residue protein sequence, read N- to C-terminus: Trigger factor (431 aa).

Positions 161 to 246 (DDRVTIDFVG…LKKVENIVLP (86 aa)) constitute a PPIase FKBP-type domain.

This sequence belongs to the FKBP-type PPIase family. Tig subfamily.

It localises to the cytoplasm. The enzyme catalyses [protein]-peptidylproline (omega=180) = [protein]-peptidylproline (omega=0). In terms of biological role, involved in protein export. Acts as a chaperone by maintaining the newly synthesized protein in an open conformation. Functions as a peptidyl-prolyl cis-trans isomerase. In Glaesserella parasuis serovar 5 (strain SH0165) (Haemophilus parasuis), this protein is Trigger factor.